Reading from the N-terminus, the 265-residue chain is Lysosomal membrane ascorbate-dependent ferrireductase CYB561A3 (265 aa).

Residues 1–2 (MA) lie on the Cytoplasmic side of the membrane. A helical transmembrane segment spans residues 3-23 (VGWFYLSVLALCSLGSMCILF). The region spanning 12–219 (ALCSLGSMCI…FGLLVLYILL (208 aa)) is the Cytochrome b561 domain. Residues 24 to 45 (TIYWMRYWHGGFAWDGSMLMFN) lie on the Lumenal side of the membrane. A helical transmembrane segment spans residues 46 to 66 (WHPVLMVTGMVVLYSAASLVY). Residues H47 and R67 each coordinate heme b. Over 67 to 83 (RLPQSWVGPRLPWKSGH) the chain is Cytoplasmic. 2 residues coordinate L-ascorbate: R76 and K80. H83 serves as a coordination point for heme b. A helical membrane pass occupies residues 84–104 (AAMHLLAFLLTVLGLHAVFEF). Over 105–119 (HNHAKIPHLYSLHSW) the chain is Lumenal. Heme b-binding positions include 112–115 (HLYS) and H117. A helical transmembrane segment spans residues 120-140 (LGITTVFLFACQWFLGFSVFL). Over 141–154 (LPWASMWLRSLLKP) the chain is Cytoplasmic. R149 contacts L-ascorbate. A helical transmembrane segment spans residues 155–175 (IHVFFGASILSLAIASVVSGI). Residues H156 and E177 each contribute to the heme b site. Residues 176 to 197 (NEKLFFSLKNGTKTYSNLPSEA) are Lumenal-facing. N-linked (GlcNAc...) asparagine glycosylation occurs at N185. A helical membrane pass occupies residues 198–218 (VFANCAGMLVVVFGLLVLYIL). At 219-265 (LASSWKRPEPGMQAEREPTRTRGRAGTPEVMLEGERGLAEPLLQKRS) the chain is on the cytoplasmic side. K224 provides a ligand contact to heme b. A compositionally biased stretch (basic and acidic residues) spans 228–238 (PGMQAEREPTR). Residues 228–265 (PGMQAEREPTRTRGRAGTPEVMLEGERGLAEPLLQKRS) form a disordered region.

In terms of assembly, homodimer. It depends on heme b as a cofactor. Post-translationally, N-glycosylated.

Its subcellular location is the late endosome membrane. It localises to the lysosome membrane. The catalysed reaction is Fe(3+)(out) + L-ascorbate(in) = monodehydro-L-ascorbate radical(in) + Fe(2+)(out) + H(+). Transmembrane reductase that uses ascorbate as an electron donor in the cytoplasm and transfers electrons across membranes to reduce iron cations Fe(3+) into Fe(2+) in the lumen of the late endosome and lysosome. Reduced iron can then be extruded from the late endosome and lysosome to the cytoplasm by divalent metal-specific transporters. It is therefore most probably involved in endosomal and lysosomal cellular iron homeostasis. The sequence is that of Lysosomal membrane ascorbate-dependent ferrireductase CYB561A3 from Bos taurus (Bovine).